The sequence spans 268 residues: Embryonic abundant protein USP92 (268 aa).

The first 22 residues, 1-22 (MEFAHLTVLSLFCLAFVGITAT), serve as a signal peptide directing secretion. Repeat copies occupy residues 50–55 (GKTNSL), 83–88 (GNTNSV), 101–106 (GVTDSI), 166–183 (YVVEDVKKVGDNAVMCHR), and 202–222 (YVVSLVASDGTKTKALTVCHH). A 3 X 6 AA approximate repeats region spans residues 50–106 (GKTNSLPIKSEELKQYSTLFFEHDLHPRKNFILGNTNSVGSIIRPFTKSRQGVTDSI). The 192-residue stretch at 68-259 (LFFEHDLHPR…GNKAAAWVPN (192 aa)) folds into the BURP domain. A 2 X approximate repeats region spans residues 166-222 (YVVEDVKKVGDNAVMCHRLNFEKVVFNCHQVRETTAYVVSLVASDGTKTKALTVCHH). Asn-259 is a glycosylation site (N-linked (GlcNAc...) asparagine).

As to expression, seed.

The protein is Embryonic abundant protein USP92 of Vicia faba (Broad bean).